Reading from the N-terminus, the 396-residue chain is 1-deoxy-D-xylulose 5-phosphate reductoisomerase (396 aa).

NADPH contacts are provided by threonine 15, glycine 16, serine 17, isoleucine 18, glycine 41, and asparagine 129. Lysine 130 is a binding site for 1-deoxy-D-xylulose 5-phosphate. Glutamate 131 contributes to the NADPH binding site. Residue aspartate 155 participates in Mn(2+) binding. Serine 156, glutamate 157, serine 182, and histidine 205 together coordinate 1-deoxy-D-xylulose 5-phosphate. Glutamate 157 lines the Mn(2+) pocket. Residue glycine 211 coordinates NADPH. The 1-deoxy-D-xylulose 5-phosphate site is built by serine 218, asparagine 223, lysine 224, and glutamate 227. Residue glutamate 227 participates in Mn(2+) binding.

This sequence belongs to the DXR family. Requires Mg(2+) as cofactor. It depends on Mn(2+) as a cofactor.

The catalysed reaction is 2-C-methyl-D-erythritol 4-phosphate + NADP(+) = 1-deoxy-D-xylulose 5-phosphate + NADPH + H(+). The protein operates within isoprenoid biosynthesis; isopentenyl diphosphate biosynthesis via DXP pathway; isopentenyl diphosphate from 1-deoxy-D-xylulose 5-phosphate: step 1/6. In terms of biological role, catalyzes the NADPH-dependent rearrangement and reduction of 1-deoxy-D-xylulose-5-phosphate (DXP) to 2-C-methyl-D-erythritol 4-phosphate (MEP). The protein is 1-deoxy-D-xylulose 5-phosphate reductoisomerase of Xanthomonas campestris pv. campestris (strain 8004).